The chain runs to 347 residues: Melanoma-associated antigen B10 (347 aa).

The segment covering 1–18 has biased composition (basic residues); that stretch reads MPRGQKSKLRAREKRRQA. Disordered stretches follow at residues 1 to 20 and 56 to 92; these read MPRG…QARG and GASN…QMEE. The span at 67–78 shows a compositional bias: low complexity; it reads AQSTSTSATAAS. The segment covering 81–92 has biased composition (basic and acidic residues); that stretch reads RHPEGVNDQMEE. Residues 111-310 form the MAGE domain; it reads VDEKVIILVH…SEFSNWYTEA (200 aa). A disordered region spans residues 328-347; sequence VSATAGARSKVKSSKSSQLQ.

The protein is Melanoma-associated antigen B10 (MAGEB10) of Homo sapiens (Human).